Here is a 792-residue protein sequence, read N- to C-terminus: MLDLSDGCSAGGTDMVTRLLADLGADVLKVEPPGGSPGRHVRPTLAGTSIGFAMHNANKRSAVLNPLDESDRRRFLDLAASADIVVDCGLPGQAAAYGASCAELADRYRHLVALSITDFGAAGPRSSWRATDPVLYAMSGALSRSGPTAGTPVLPPDGIASATAAVQAAWAVLVAYFNRLRCGTGDYIDFSRFDAVVMALDPPFGAHGQVAAGIRSTGRWRGRPKNQDAYPIYPCRDGYVRFCVMAPRQWRGLRRWLGEPEDFQDPKYDVIGARLAAWPQISVLVAKLCAEKTMKELVAAGQALGVPITAVLTPSRILASEHFQAVGAITDAELVPGVRTGVPTGYFVVDGKRAGFRTPAPAAGQDEPRWLADPAPVPPPSGRVGGYPFEGLRILDLGIIVAGGELSRLFGDLGAEVIKVESADHPDGLRQTRVGDAMSESFAWTHRNHLALGLDLRNSEGKAIFGRLVAESDAVFANFKPGTLTSLGFSYDVLHAFNPRIVLAGSSAFGNRGPWSTRMGYGPLVRAATGVTRVWTSDEAQPDNSRHPFYDATTIFPDHVVGRVGALLALAALIHRDRTGGGAHVHISQAEVVVNQLDTMFVAEAARATDVAEIHPDTSVHAVYPCAGDDEWCVISIRSDDEWRRATSVFGQPELANDPRFGASRSRVANRSELVAAVSAWTSTRTPVQAAGALQAAGVAAGPMNRPSDILEDPQLIERNLFRDMVHPLIARPLPAETGPAPFRHIPQAPQRPAPLPGQDSVQICRKLLGMTADETERLINERVMFGPAVTA.

The active-site Nucleophile is Asp558.

Belongs to the CoA-transferase III family.

In terms of biological role, probable CoA-transferase. This chain is Probable CoA-transferase Rv1866, found in Mycobacterium tuberculosis (strain ATCC 25618 / H37Rv).